The chain runs to 370 residues: Anhydro-N-acetylmuramic acid kinase (370 aa).

Position 12 to 19 (12 to 19 (GTSLDGVD)) interacts with ATP.

This sequence belongs to the anhydro-N-acetylmuramic acid kinase family.

It catalyses the reaction 1,6-anhydro-N-acetyl-beta-muramate + ATP + H2O = N-acetyl-D-muramate 6-phosphate + ADP + H(+). It participates in amino-sugar metabolism; 1,6-anhydro-N-acetylmuramate degradation. The protein operates within cell wall biogenesis; peptidoglycan recycling. Its function is as follows. Catalyzes the specific phosphorylation of 1,6-anhydro-N-acetylmuramic acid (anhMurNAc) with the simultaneous cleavage of the 1,6-anhydro ring, generating MurNAc-6-P. Is required for the utilization of anhMurNAc either imported from the medium or derived from its own cell wall murein, and thus plays a role in cell wall recycling. The chain is Anhydro-N-acetylmuramic acid kinase from Proteus mirabilis (strain HI4320).